The chain runs to 327 residues: Interleukin-12 subunit beta (327 aa).

The first 22 residues, 1–22, serve as a signal peptide directing secretion; that stretch reads MHPQQLVVSWFSLVLLASPIVA. One can recognise an Ig-like C2-type domain in the interval 23–106; that stretch reads IWELEKNVYI…LSRSLLLLHK (84 aa). An intrachain disulfide couples cysteine 50 to cysteine 90. Asparagine 223 is a glycosylation site (N-linked (GlcNAc...) asparagine). In terms of domain architecture, Fibronectin type-III spans 238–327; sequence PPKNLQLRPL…WSEWASVSCS (90 aa).

The protein belongs to the IL-12B family. In terms of assembly, heterodimer with IL12A; disulfide-linked. The heterodimer is known as interleukin IL-12. Heterodimer with IL23A; disulfide-linked. The heterodimer is known as interleukin IL-23. Also secreted as a monomer. Interacts with NBR1; this interaction promotes IL-12 secretion.

The protein resides in the secreted. Functionally, cytokine that can act as a growth factor for activated T and NK cells, enhance the lytic activity of NK/lymphokine-activated killer cells, and stimulate the production of IFN-gamma by resting PBMC. The sequence is that of Interleukin-12 subunit beta (IL12B) from Bubalus carabanensis (Swamp type water buffalo).